Reading from the N-terminus, the 253-residue chain is HTH-type transcriptional regulator YdeO (253 aa).

One can recognise an HTH araC/xylS-type domain in the interval 137-233 (GKVRNIVNMK…GNSPKRVSKE (97 aa)). 2 consecutive DNA-binding regions (H-T-H motif) follow at residues 154-175 (KDICDCLYISESLLKKKLKQEQ) and 200-223 (VNKIAEQCGYASTSYFIYAFRKHF).

Its function is as follows. Induces the expression of gadE and mdtEF. Could also regulate the expression of other genes involved in acid resistance. This Escherichia coli (strain K12) protein is HTH-type transcriptional regulator YdeO (ydeO).